Consider the following 183-residue polypeptide: TATA-box-binding protein (183 aa).

2 consecutive repeat copies span residues isoleucine 10–leucine 86 and isoleucine 101–isoleucine 177.

This sequence belongs to the TBP family.

Its function is as follows. General factor that plays a role in the activation of archaeal genes transcribed by RNA polymerase. Binds specifically to the TATA box promoter element which lies close to the position of transcription initiation. The sequence is that of TATA-box-binding protein (tbp) from Methanocaldococcus jannaschii (strain ATCC 43067 / DSM 2661 / JAL-1 / JCM 10045 / NBRC 100440) (Methanococcus jannaschii).